The chain runs to 494 residues: Probable malate:quinone oxidoreductase (494 aa).

This sequence belongs to the MQO family. FAD is required as a cofactor.

The catalysed reaction is (S)-malate + a quinone = a quinol + oxaloacetate. Its pathway is carbohydrate metabolism; tricarboxylic acid cycle; oxaloacetate from (S)-malate (quinone route): step 1/1. The protein is Probable malate:quinone oxidoreductase of Helicobacter hepaticus (strain ATCC 51449 / 3B1).